The following is a 412-amino-acid chain: Tyrosine--tRNA ligase (412 aa).

Positions 48 to 57 match the 'HIGH' region motif; the sequence is PSRPDLHLGH. Positions 232-236 match the 'KMSKS' region motif; that stretch reads KMSKS. An ATP-binding site is contributed by Lys-235. An S4 RNA-binding domain is found at 342–405; sequence VGLLNLMRHA…GKRRFARIRP (64 aa).

It belongs to the class-I aminoacyl-tRNA synthetase family. TyrS type 2 subfamily. In terms of assembly, homodimer.

It is found in the cytoplasm. It carries out the reaction tRNA(Tyr) + L-tyrosine + ATP = L-tyrosyl-tRNA(Tyr) + AMP + diphosphate + H(+). In terms of biological role, catalyzes the attachment of tyrosine to tRNA(Tyr) in a two-step reaction: tyrosine is first activated by ATP to form Tyr-AMP and then transferred to the acceptor end of tRNA(Tyr). The protein is Tyrosine--tRNA ligase of Salinibacter ruber (strain DSM 13855 / M31).